The chain runs to 76 residues: uncharacterized protein (76 aa).

Residues G20–F42 traverse the membrane as a helical segment.

The protein resides in the membrane. This is an uncharacterized protein from Dictyostelium discoideum (Social amoeba).